The sequence spans 219 residues: Transmembrane protein 125 (219 aa).

The next 4 helical transmembrane spans lie at 36-56, 68-88, 114-134, and 147-167; these read LCFA…VALL, LAVG…QLMS, ALVV…LAGL, and MLSV…GLLL.

It is found in the membrane. This is Transmembrane protein 125 (TMEM125) from Bos taurus (Bovine).